We begin with the raw amino-acid sequence, 620 residues long: 1-deoxy-D-xylulose-5-phosphate synthase (620 aa).

Thiamine diphosphate is bound by residues His80 and 121 to 123 (GHS). Asp152 contacts Mg(2+). Thiamine diphosphate contacts are provided by residues 153–154 (GA), Asn181, Tyr288, and Glu370. Asn181 lines the Mg(2+) pocket.

The protein belongs to the transketolase family. DXPS subfamily. As to quaternary structure, homodimer. Mg(2+) is required as a cofactor. The cofactor is thiamine diphosphate.

It catalyses the reaction D-glyceraldehyde 3-phosphate + pyruvate + H(+) = 1-deoxy-D-xylulose 5-phosphate + CO2. Its pathway is metabolic intermediate biosynthesis; 1-deoxy-D-xylulose 5-phosphate biosynthesis; 1-deoxy-D-xylulose 5-phosphate from D-glyceraldehyde 3-phosphate and pyruvate: step 1/1. In terms of biological role, catalyzes the acyloin condensation reaction between C atoms 2 and 3 of pyruvate and glyceraldehyde 3-phosphate to yield 1-deoxy-D-xylulose-5-phosphate (DXP). This Sodalis glossinidius (strain morsitans) protein is 1-deoxy-D-xylulose-5-phosphate synthase.